The primary structure comprises 671 residues: UvrABC system protein B (671 aa).

The Helicase ATP-binding domain occupies 31–414 (DGFEQGEKAQ…ELNQTDHKVE (384 aa)). 44–51 (GATGTGKT) contributes to the ATP binding site. A Beta-hairpin motif is present at residues 97–120 (YYDYYQPEAYVPQSDTYIEKDSSI). The Helicase C-terminal domain occupies 435–601 (QIDDLVGEVN…TIVKPIRDVI (167 aa)). Residues 630–665 (QNMIKTLTAQMQEAAKKLDFEEAANLRDAIMDLKKQ) enclose the UVR domain.

This sequence belongs to the UvrB family. In terms of assembly, forms a heterotetramer with UvrA during the search for lesions. Interacts with UvrC in an incision complex.

The protein resides in the cytoplasm. Functionally, the UvrABC repair system catalyzes the recognition and processing of DNA lesions. A damage recognition complex composed of 2 UvrA and 2 UvrB subunits scans DNA for abnormalities. Upon binding of the UvrA(2)B(2) complex to a putative damaged site, the DNA wraps around one UvrB monomer. DNA wrap is dependent on ATP binding by UvrB and probably causes local melting of the DNA helix, facilitating insertion of UvrB beta-hairpin between the DNA strands. Then UvrB probes one DNA strand for the presence of a lesion. If a lesion is found the UvrA subunits dissociate and the UvrB-DNA preincision complex is formed. This complex is subsequently bound by UvrC and the second UvrB is released. If no lesion is found, the DNA wraps around the other UvrB subunit that will check the other stand for damage. The protein is UvrABC system protein B of Lactobacillus johnsonii (strain CNCM I-12250 / La1 / NCC 533).